Reading from the N-terminus, the 432-residue chain is Adenosylhomocysteinase (432 aa).

Substrate is bound by residues T56, D131, and E156. Residue 157–159 (TTT) coordinates NAD(+). K186 and D190 together coordinate substrate. NAD(+)-binding positions include 222–227 (GDVGKG), E243, N248, 299–301 (IGH), N346, H353, K426, 426–430 (KPDHY), and Y430.

The protein belongs to the adenosylhomocysteinase family. As to quaternary structure, interacts with AhcyL1; the interaction may negatively regulate Ahcy catalytic activity. The cofactor is NAD(+).

The catalysed reaction is S-adenosyl-L-homocysteine + H2O = L-homocysteine + adenosine. It functions in the pathway amino-acid biosynthesis; L-homocysteine biosynthesis; L-homocysteine from S-adenosyl-L-homocysteine: step 1/1. Functionally, adenosylhomocysteine is a competitive inhibitor of S-adenosyl-L-methionine-dependent methyl transferase reactions; therefore adenosylhomocysteinase may play a key role in the control of methylations via regulation of the intracellular concentration of adenosylhomocysteine. The polypeptide is Adenosylhomocysteinase (Drosophila melanogaster (Fruit fly)).